Here is a 123-residue protein sequence, read N- to C-terminus: Small ribosomal subunit protein uS12 (123 aa).

The disordered stretch occupies residues 1 to 28 (MPTIQQLIRNPREPKRTRTKTPALKACP). At Asp89 the chain carries 3-methylthioaspartic acid. Positions 104 to 123 (TQPVKNRKQRRSHYGAKKPK) are disordered. Over residues 108–123 (KNRKQRRSHYGAKKPK) the composition is skewed to basic residues.

It belongs to the universal ribosomal protein uS12 family. Part of the 30S ribosomal subunit. Contacts proteins S8 and S17. May interact with IF1 in the 30S initiation complex.

Its function is as follows. With S4 and S5 plays an important role in translational accuracy. Interacts with and stabilizes bases of the 16S rRNA that are involved in tRNA selection in the A site and with the mRNA backbone. Located at the interface of the 30S and 50S subunits, it traverses the body of the 30S subunit contacting proteins on the other side and probably holding the rRNA structure together. The combined cluster of proteins S8, S12 and S17 appears to hold together the shoulder and platform of the 30S subunit. This is Small ribosomal subunit protein uS12 from Hyphomonas neptunium (strain ATCC 15444).